A 231-amino-acid chain; its full sequence is Deoxyribose-phosphate aldolase (231 aa).

Residue Asp97 is the Proton donor/acceptor of the active site. Catalysis depends on Lys162, which acts as the Schiff-base intermediate with acetaldehyde. Lys191 functions as the Proton donor/acceptor in the catalytic mechanism.

It belongs to the DeoC/FbaB aldolase family. DeoC type 1 subfamily.

The protein localises to the cytoplasm. It carries out the reaction 2-deoxy-D-ribose 5-phosphate = D-glyceraldehyde 3-phosphate + acetaldehyde. Its pathway is carbohydrate degradation; 2-deoxy-D-ribose 1-phosphate degradation; D-glyceraldehyde 3-phosphate and acetaldehyde from 2-deoxy-alpha-D-ribose 1-phosphate: step 2/2. In terms of biological role, catalyzes a reversible aldol reaction between acetaldehyde and D-glyceraldehyde 3-phosphate to generate 2-deoxy-D-ribose 5-phosphate. In Caldanaerobacter subterraneus subsp. tengcongensis (strain DSM 15242 / JCM 11007 / NBRC 100824 / MB4) (Thermoanaerobacter tengcongensis), this protein is Deoxyribose-phosphate aldolase.